A 570-amino-acid polypeptide reads, in one-letter code: FERM domain-containing protein 5 (570 aa).

The 282-residue stretch at Tyr-17 to Lys-298 folds into the FERM domain. The tract at residues Ser-308–Pro-353 is interaction with ROCK1. The segment at Ala-344–Thr-367 is disordered. A Phosphoserine modification is found at Ser-375. Residues Asp-385–Ser-407 are disordered. Residues His-388–Gly-398 are compositionally biased toward polar residues. Residues Leu-504–Glu-524 form a helical membrane-spanning segment.

Interacts with CTNND1. Interacts with ITGB5 (via cytoplasmic domain) and ROCK1.

It localises to the membrane. It is found in the cell junction. Its subcellular location is the adherens junction. May be involved in regulation of cell migration. May regulate cell-matrix interactions via its interaction with ITGB5 and modifying ITGB5 cytoplasmic tail interactions such as with FERMT2 and TLN1. May regulate ROCK1 kinase activity possibly involved in regulation of actin stress fiber formation. This is FERM domain-containing protein 5 (FRMD5) from Homo sapiens (Human).